The primary structure comprises 459 residues: MIIYNTLTGIKEPFIPLNVDNIKVYVCGPTVYNFVHIGNARSIVIYDVLFRLLKLLYPSVTYVRNITDIDDKIINVAQSNGQNICEVTSVYIKAFHEDMKMLNCLEPTYEPKATDNINVMINLIQKLIDHGHAYVDNATVFFNVESYPSYGQLSKRNIKELIYGSRVDIELGKKHPGDFVLWKPATEVDNKLMSCWPSPWGLGRPGWHIECSAMSYCYLSENFDIHGGGADLQFPHHENEIAQSCCAFPGSYYAKYWIHNGFLTVNGEKMSKSLGNVLTVRQLLESGVKGELIRYVLLNTHYRKPLDWFNMTLVSAQESLNRMYTALSSVNVDLSLDDDVELSSDVVDCLKDDINTPKAISVLHEMVTEINKTSDVMKKTSLAKTLIKTANFLGILQHSWQDWFRVNENDQEIDKLIDERRIARANNDFKKADDIRQLLLSKGIVLSDNKDGTTHWYKK.

Zn(2+) is bound at residue Cys-27. The 'HIGH' region motif lies at 29-39; it reads PTVYNFVHIGN. 3 residues coordinate Zn(2+): Cys-211, His-236, and Glu-240. The short motif at 269 to 273 is the 'KMSKS' region element; sequence KMSKS. Lys-272 contributes to the ATP binding site.

Belongs to the class-I aminoacyl-tRNA synthetase family. As to quaternary structure, monomer. Zn(2+) serves as cofactor.

It is found in the cytoplasm. The catalysed reaction is tRNA(Cys) + L-cysteine + ATP = L-cysteinyl-tRNA(Cys) + AMP + diphosphate. This is Cysteine--tRNA ligase from Ehrlichia canis (strain Jake).